A 660-amino-acid polypeptide reads, in one-letter code: tRNA 5-methylaminomethyl-2-thiouridine biosynthesis bifunctional protein MnmC (660 aa).

The tract at residues 1–242 (MTDRIVPATL…KRAMLVGEFA (242 aa)) is tRNA (mnm(5)s(2)U34)-methyltransferase. An FAD-dependent cmnm(5)s(2)U34 oxidoreductase region spans residues 266–660 (IGAGLAGCAV…VRALRHGRVA (395 aa)).

This sequence in the N-terminal section; belongs to the methyltransferase superfamily. tRNA (mnm(5)s(2)U34)-methyltransferase family. The protein in the C-terminal section; belongs to the DAO family. FAD serves as cofactor.

It is found in the cytoplasm. It catalyses the reaction 5-aminomethyl-2-thiouridine(34) in tRNA + S-adenosyl-L-methionine = 5-methylaminomethyl-2-thiouridine(34) in tRNA + S-adenosyl-L-homocysteine + H(+). Its function is as follows. Catalyzes the last two steps in the biosynthesis of 5-methylaminomethyl-2-thiouridine (mnm(5)s(2)U) at the wobble position (U34) in tRNA. Catalyzes the FAD-dependent demodification of cmnm(5)s(2)U34 to nm(5)s(2)U34, followed by the transfer of a methyl group from S-adenosyl-L-methionine to nm(5)s(2)U34, to form mnm(5)s(2)U34. This is tRNA 5-methylaminomethyl-2-thiouridine biosynthesis bifunctional protein MnmC from Burkholderia pseudomallei (strain K96243).